Reading from the N-terminus, the 55-residue chain is Accessory gland-specific peptide 70A (55 aa).

The signal sequence occupies residues Met1–Ser19. Hydroxyproline is present on residues Pro28, Pro32, Pro34, and Pro38. Cys43 and Cys55 are oxidised to a cystine.

As to expression, main cells of the accessory glands of males (paragonial gland).

It is found in the secreted. Represses female sexual receptivity and stimulates oviposition. The protein is Accessory gland-specific peptide 70A (Acp70A) of Drosophila mauritiana (Fruit fly).